Consider the following 230-residue polypeptide: Heptaprenylglyceryl phosphate synthase (230 aa).

Lys-12 lines the sn-glycerol 1-phosphate pocket. Residues Asp-14 and Thr-40 each contribute to the Mg(2+) site. Sn-glycerol 1-phosphate is bound by residues 159 to 164 (YIEYSG), Gly-189, and 209 to 210 (GD).

The protein belongs to the GGGP/HepGP synthase family. Group I subfamily. Homodimer. It depends on Mg(2+) as a cofactor.

The enzyme catalyses sn-glycerol 1-phosphate + all-trans-heptaprenyl diphosphate = 3-heptaprenyl-sn-glycero-1-phosphate + diphosphate. Its pathway is membrane lipid metabolism; glycerophospholipid metabolism. Its function is as follows. Prenyltransferase that catalyzes in vivo the transfer of the heptaprenyl moiety of heptaprenyl pyrophosphate (HepPP; 35 carbon atoms) to the C3 hydroxyl of sn-glycerol-1-phosphate (G1P), producing heptaprenylglyceryl phosphate (HepGP). This reaction is an ether-bond-formation step in the biosynthesis of archaea-type G1P-based membrane lipids found in Bacillales. To a much lesser extent, is also able to use geranylgeranyl diphosphate (GGPP; C20) as the prenyl donor. The sequence is that of Heptaprenylglyceryl phosphate synthase from Staphylococcus aureus (strain NCTC 8325 / PS 47).